Here is a 209-residue protein sequence, read N- to C-terminus: Small ribosomal subunit protein uS4 (209 aa).

Residues 98 to 164 form the S4 RNA-binding domain; the sequence is RRLDNVVYRL…LPIKNAIELN (67 aa).

It belongs to the universal ribosomal protein uS4 family. In terms of assembly, part of the 30S ribosomal subunit. Contacts protein S5. The interaction surface between S4 and S5 is involved in control of translational fidelity.

Functionally, one of the primary rRNA binding proteins, it binds directly to 16S rRNA where it nucleates assembly of the body of the 30S subunit. Its function is as follows. With S5 and S12 plays an important role in translational accuracy. The sequence is that of Small ribosomal subunit protein uS4 from Thermosipho melanesiensis (strain DSM 12029 / CIP 104789 / BI429).